The chain runs to 355 residues: MDDNKKRALAAALGQIERQFGKGAVMRMGDHERTGIPAISTGSLGLDIALGIGGLPKGRIVEIYGPESSGKTTLTLSVIAEAQKSGATCAFVDAEHALDPEYAGKLGVNVDDLLVSQPDTGEQALEITDMLVRSNAVDVIIVDSVAALVPKAEIEGEMGDMHVGLQARLMSQALRKITGNIKNANCLVIFINQIRMKIGVMFGSPETTTGGNALKFYASVRLDIRRTGAVKEGDEVVGSETRVKIVKNKVSPPFRQAEFQILYGKGIYRNGEIIDLGVSQGLVEKSGAWYAYQGNKIGQGKANAAKYLQENPAIGAEIEKQIREKLLKAGVVAEAGKAAAADAKADDVADADAGY.

ATP is bound at residue 65 to 72 (GPESSGKT).

This sequence belongs to the RecA family.

It is found in the cytoplasm. In terms of biological role, can catalyze the hydrolysis of ATP in the presence of single-stranded DNA, the ATP-dependent uptake of single-stranded DNA by duplex DNA, and the ATP-dependent hybridization of homologous single-stranded DNAs. It interacts with LexA causing its activation and leading to its autocatalytic cleavage. This chain is Protein RecA, found in Pseudomonas putida (strain W619).